Here is a 308-residue protein sequence, read N- to C-terminus: ATP synthase gamma chain (308 aa).

The protein belongs to the ATPase gamma chain family. In terms of assembly, F-type ATPases have 2 components, CF(1) - the catalytic core - and CF(0) - the membrane proton channel. CF(1) has five subunits: alpha(3), beta(3), gamma(1), delta(1), epsilon(1). CF(0) has three main subunits: a, b and c.

It is found in the cell inner membrane. Functionally, produces ATP from ADP in the presence of a proton gradient across the membrane. The gamma chain is believed to be important in regulating ATPase activity and the flow of protons through the CF(0) complex. The chain is ATP synthase gamma chain from Salinibacter ruber (strain DSM 13855 / M31).